The following is a 371-amino-acid chain: tRNA-specific 2-thiouridylase MnmA (371 aa).

ATP-binding positions include 13-20 (GMSGGVDS) and methionine 39. The interaction with target base in tRNA stretch occupies residues 99-101 (NPD). Cysteine 104 (nucleophile) is an active-site residue. A disulfide bond links cysteine 104 and cysteine 200. Residue glycine 128 coordinates ATP. The interval 150–152 (KDQ) is interaction with tRNA. The active-site Cysteine persulfide intermediate is the cysteine 200. Residues 308-309 (RY) form an interaction with tRNA region.

It belongs to the MnmA/TRMU family.

It localises to the cytoplasm. The enzyme catalyses S-sulfanyl-L-cysteinyl-[protein] + uridine(34) in tRNA + AH2 + ATP = 2-thiouridine(34) in tRNA + L-cysteinyl-[protein] + A + AMP + diphosphate + H(+). Catalyzes the 2-thiolation of uridine at the wobble position (U34) of tRNA, leading to the formation of s(2)U34. In Bacillus anthracis, this protein is tRNA-specific 2-thiouridylase MnmA.